Here is a 172-residue protein sequence, read N- to C-terminus: Large ribosomal subunit protein uL10 (172 aa).

Belongs to the universal ribosomal protein uL10 family. As to quaternary structure, part of the ribosomal stalk of the 50S ribosomal subunit. The N-terminus interacts with L11 and the large rRNA to form the base of the stalk. The C-terminus forms an elongated spine to which L12 dimers bind in a sequential fashion forming a multimeric L10(L12)X complex.

Functionally, forms part of the ribosomal stalk, playing a central role in the interaction of the ribosome with GTP-bound translation factors. The sequence is that of Large ribosomal subunit protein uL10 from Bartonella tribocorum (strain CIP 105476 / IBS 506).